The sequence spans 327 residues: Olfactory receptor 6A2 (327 aa).

Residues 1 to 26 (MEWRNHSGRVSEFVLLGFPAPAPLQV) lie on the Extracellular side of the membrane. N-linked (GlcNAc...) asparagine glycosylation is present at N5. The helical transmembrane segment at 27 to 47 (LLFALLLLAYVLVLTENTLII) threads the bilayer. Over 48–55 (MAIRNHST) the chain is Cytoplasmic. A helical membrane pass occupies residues 56 to 76 (LHKPMYFFLANMSFLEIWYVT). Topologically, residues 77-104 (VTIPKMLAGFVGSKQDHGQLISFEGCMT) are extracellular. An intrachain disulfide couples C102 to C194. Residues 105-125 (QLYFFLGLGCTECVLLAVMAY) form a helical membrane-spanning segment. At 126–144 (DRYMAICYPLHYPVIVSGR) the chain is on the cytoplasmic side. A helical membrane pass occupies residues 145 to 165 (LCVQMAAGSWAGGFGISMVKV). At 166–201 (FLISGLSYCGPNIINHFFCDVSPLLNLSCTDMSTAE) the chain is on the extracellular side. Residue N191 is glycosylated (N-linked (GlcNAc...) asparagine). A helical membrane pass occupies residues 202-222 (LTDFILAIFILLGPLSVTGAS). Residues 223-242 (YVAITGAVMHIPSAAGRYKA) are Cytoplasmic-facing. The chain crosses the membrane as a helical span at residues 243 to 263 (FSTCASHLTVVIIFYAASIFI). The Extracellular portion of the chain corresponds to 264–276 (YARPKALSAFDTN). Residues 277–297 (KLVSVLYAVIVPLLNPIIYCL) form a helical membrane-spanning segment. The Cytoplasmic portion of the chain corresponds to 298-327 (RNQEVKRALCCTLHLYQHQDPDPKKASRNV).

This sequence belongs to the G-protein coupled receptor 1 family.

The protein localises to the cell membrane. Its function is as follows. Odorant receptor. This is Olfactory receptor 6A2 (OR6A2) from Homo sapiens (Human).